We begin with the raw amino-acid sequence, 277 residues long: Myelin proteolipid protein (277 aa).

At 1–10 (MGLLECCARC) the chain is on the cytoplasmic side. S-palmitoyl cysteine attachment occurs at residues cysteine 6, cysteine 7, and cysteine 10. The helical transmembrane segment at 11-36 (LVGAPFASLVATGLCFFGVALFCGCG) threads the bilayer. Topologically, residues 37 to 59 (HEALTGTEKLIETYFSKNYQDYE) are extracellular. Residues 60-88 (YLINVIHAFQYVIYGTASFFFLYGALLLA) traverse the membrane as a helical segment. The Cytoplasmic portion of the chain corresponds to 89–151 (EGFYTTGAVR…LGKWLGHPDK (63 aa)). The S-palmitoyl cysteine moiety is linked to residue cysteine 109. Serine 114 is subject to Phosphoserine. Threonine 116 and threonine 118 each carry phosphothreonine. 2 S-palmitoyl cysteine lipidation sites follow: cysteine 139 and cysteine 141. Residues 152–178 (FVGITYALTVVWLLVFACSAVPVYIYF) form a helical membrane-spanning segment. Topologically, residues 179 to 238 (NTWTTCQSIAFPSKTSASIGTLCADARMYGVLPWNAFPGKVCGSNLLSICKTAEFQMTFH) are extracellular. 2 cysteine pairs are disulfide-bonded: cysteine 184–cysteine 228 and cysteine 201–cysteine 220. Threonine 199 carries the O-palmitoyl threonine lipid modification. Residues 239–268 (LFIAAFVGAAATLVSLLTFMIAATYNFAVL) form a helical membrane-spanning segment. The Cytoplasmic portion of the chain corresponds to 269–277 (KLMGRGTKF).

This sequence belongs to the myelin proteolipid protein family. Interacts with MAL.

The protein localises to the cell membrane. It is found in the myelin membrane. Its function is as follows. This is the major myelin protein from the central nervous system. It plays an important role in the formation or maintenance of the multilamellar structure of myelin. This is Myelin proteolipid protein (PLP1) from Oryctolagus cuniculus (Rabbit).